The sequence spans 507 residues: Nucleoporin p54 (507 aa).

9 consecutive repeat copies span residues 5–6 (FG), 25–26 (FG), 28–29 (FG), 53–54 (FG), 61–62 (FG), 63–64 (FG), 67–68 (FG), 87–88 (FG), and 444–445 (FG). Residues 5–445 (FGAPSGTSGT…SQIRMQNHFG (441 aa)) are 9 X 2 AA repeats of F-G.

It belongs to the NUP54 family. In terms of assembly, component of the p62 complex, a complex composed of NUP62, NUP54, and the isoform p58 and isoform p45 of NUP58. Interacts with NUTF2. In terms of processing, O-glycosylated.

It localises to the nucleus. Its subcellular location is the nuclear pore complex. The protein localises to the nucleus membrane. Component of the nuclear pore complex, a complex required for the trafficking across the nuclear membrane. The protein is Nucleoporin p54 (NUP54) of Homo sapiens (Human).